Reading from the N-terminus, the 329-residue chain is Ketol-acid reductoisomerase (NADP(+)) (329 aa).

The KARI N-terminal Rossmann domain maps to 2-182; sequence VEIYYDDDAS…GGTRAGALRT (181 aa). NADP(+)-binding positions include 25-28, Ser51, and Ser53; that span reads YGSQ. His108 is a catalytic residue. NADP(+) is bound at residue Gly134. The KARI C-terminal knotted domain occupies 183 to 328; the sequence is TFTEETETDL…AKLRPMMSWI (146 aa). Asp191, Glu195, Glu227, and Glu231 together coordinate Mg(2+). Ser252 is a binding site for substrate.

This sequence belongs to the ketol-acid reductoisomerase family. The cofactor is Mg(2+).

It carries out the reaction (2R)-2,3-dihydroxy-3-methylbutanoate + NADP(+) = (2S)-2-acetolactate + NADPH + H(+). It catalyses the reaction (2R,3R)-2,3-dihydroxy-3-methylpentanoate + NADP(+) = (S)-2-ethyl-2-hydroxy-3-oxobutanoate + NADPH + H(+). Its pathway is amino-acid biosynthesis; L-isoleucine biosynthesis; L-isoleucine from 2-oxobutanoate: step 2/4. It functions in the pathway amino-acid biosynthesis; L-valine biosynthesis; L-valine from pyruvate: step 2/4. Its function is as follows. Involved in the biosynthesis of branched-chain amino acids (BCAA). Catalyzes an alkyl-migration followed by a ketol-acid reduction of (S)-2-acetolactate (S2AL) to yield (R)-2,3-dihydroxy-isovalerate. In the isomerase reaction, S2AL is rearranged via a Mg-dependent methyl migration to produce 3-hydroxy-3-methyl-2-ketobutyrate (HMKB). In the reductase reaction, this 2-ketoacid undergoes a metal-dependent reduction by NADPH to yield (R)-2,3-dihydroxy-isovalerate. The chain is Ketol-acid reductoisomerase (NADP(+)) from Frankia casuarinae (strain DSM 45818 / CECT 9043 / HFP020203 / CcI3).